The primary structure comprises 425 residues: Glutamate-1-semialdehyde 2,1-aminomutase (425 aa).

N6-(pyridoxal phosphate)lysine is present on K265.

This sequence belongs to the class-III pyridoxal-phosphate-dependent aminotransferase family. HemL subfamily. As to quaternary structure, homodimer. Pyridoxal 5'-phosphate serves as cofactor.

The protein localises to the cytoplasm. It carries out the reaction (S)-4-amino-5-oxopentanoate = 5-aminolevulinate. It participates in porphyrin-containing compound metabolism; protoporphyrin-IX biosynthesis; 5-aminolevulinate from L-glutamyl-tRNA(Glu): step 2/2. The polypeptide is Glutamate-1-semialdehyde 2,1-aminomutase (Opitutus terrae (strain DSM 11246 / JCM 15787 / PB90-1)).